The chain runs to 106 residues: ATP-dependent Clp protease adapter protein ClpS (106 aa).

It belongs to the ClpS family. In terms of assembly, binds to the N-terminal domain of the chaperone ClpA.

Functionally, involved in the modulation of the specificity of the ClpAP-mediated ATP-dependent protein degradation. The sequence is that of ATP-dependent Clp protease adapter protein ClpS from Vibrio vulnificus (strain CMCP6).